Consider the following 268-residue polypeptide: Shikimate dehydrogenase (NADP(+)) (268 aa).

Residues 13–15 (SLS) and Thr60 each bind shikimate. Catalysis depends on Lys64, which acts as the Proton acceptor. Glu76 is a binding site for NADP(+). The shikimate site is built by Asn85 and Asp100. Residues 124 to 128 (GAGGA), 148 to 153 (NRTMAR), and Ile209 each bind NADP(+). Tyr211 contributes to the shikimate binding site. Residue Gly232 participates in NADP(+) binding.

This sequence belongs to the shikimate dehydrogenase family. In terms of assembly, homodimer.

It catalyses the reaction shikimate + NADP(+) = 3-dehydroshikimate + NADPH + H(+). It participates in metabolic intermediate biosynthesis; chorismate biosynthesis; chorismate from D-erythrose 4-phosphate and phosphoenolpyruvate: step 4/7. Its function is as follows. Involved in the biosynthesis of the chorismate, which leads to the biosynthesis of aromatic amino acids. Catalyzes the reversible NADPH linked reduction of 3-dehydroshikimate (DHSA) to yield shikimate (SA). The polypeptide is Shikimate dehydrogenase (NADP(+)) (Staphylococcus aureus (strain MSSA476)).